The chain runs to 294 residues: Peroxidase-like protein 3 (294 aa).

Asparagine 129 carries N-linked (GlcNAc...) asparagine glycosylation.

The protein belongs to the peroxidase family. Component of the acid-insoluble and acid-soluble organic matrix of calcified layers of the shell (at protein level).

The protein resides in the secreted. This Lottia gigantea (Giant owl limpet) protein is Peroxidase-like protein 3.